The chain runs to 471 residues: MSQTSLQPVHVVGGGLAGSEAAFQLAERGVPVVLHEMRPVRGTEAHHTDGLAELVCSNSFRSDDAQTNAVGVLHAEMRRAGSLILRCADANQVPAGGALAVDRDGFSQAVTAALAEHPLVEIRREEVTAIPPEEWDNVIIATGPLTSPALAQAVLELTGESALAFFDAIAPIVHLDSIDLSKAWFQSRYDKVGPGGTGADYINCPLDKEQYEAFVDALLASEKVPLRDFEAKTPYFDGCLPIEVMAERGRETLRFGPLKPVGLTNPHNPDVKPHAVIQLRQDNKLGTLYNLVGFQTKMRHGEQVRVFRTIPGLENAEFARLGGLHRNTYLNSPRLLDGTLRLKAAPRLRFAGQITGCEGYVESAAVGLMAGRFAAAERRGEALVPPPATTAHGALLAHITGGHIETVDAGPRSFQPMNVNFGLFPQLDVSPKGADGKRLRGSEKTLAKKRLLAERALSDMSAWLDTPAAAA.

Position 13 to 18 (13 to 18 (GGGLAG)) interacts with FAD.

It belongs to the MnmG family. TrmFO subfamily. FAD is required as a cofactor.

It is found in the cytoplasm. The enzyme catalyses uridine(54) in tRNA + (6R)-5,10-methylene-5,6,7,8-tetrahydrofolate + NADH + H(+) = 5-methyluridine(54) in tRNA + (6S)-5,6,7,8-tetrahydrofolate + NAD(+). It carries out the reaction uridine(54) in tRNA + (6R)-5,10-methylene-5,6,7,8-tetrahydrofolate + NADPH + H(+) = 5-methyluridine(54) in tRNA + (6S)-5,6,7,8-tetrahydrofolate + NADP(+). Catalyzes the folate-dependent formation of 5-methyl-uridine at position 54 (M-5-U54) in all tRNAs. In Azorhizobium caulinodans (strain ATCC 43989 / DSM 5975 / JCM 20966 / LMG 6465 / NBRC 14845 / NCIMB 13405 / ORS 571), this protein is Methylenetetrahydrofolate--tRNA-(uracil-5-)-methyltransferase TrmFO.